Reading from the N-terminus, the 89-residue chain is Small ribosomal subunit protein uS15 (89 aa).

It belongs to the universal ribosomal protein uS15 family. Part of the 30S ribosomal subunit. Forms a bridge to the 50S subunit in the 70S ribosome, contacting the 23S rRNA.

In terms of biological role, one of the primary rRNA binding proteins, it binds directly to 16S rRNA where it helps nucleate assembly of the platform of the 30S subunit by binding and bridging several RNA helices of the 16S rRNA. Forms an intersubunit bridge (bridge B4) with the 23S rRNA of the 50S subunit in the ribosome. In Mycobacterium avium (strain 104), this protein is Small ribosomal subunit protein uS15.